An 875-amino-acid chain; its full sequence is Leucine--tRNA ligase (875 aa).

Residues 1 to 20 (MPSAGSVNAANPAVDTSAQT) are compositionally biased toward polar residues. The tract at residues 1–22 (MPSAGSVNAANPAVDTSAQTGR) is disordered. Residues 60-70 (PYPSGSLHMGH) carry the 'HIGH' region motif. A 'KMSKS' region motif is present at residues 634–638 (KMSKS). Lys-637 contacts ATP.

Belongs to the class-I aminoacyl-tRNA synthetase family.

The protein resides in the cytoplasm. It catalyses the reaction tRNA(Leu) + L-leucine + ATP = L-leucyl-tRNA(Leu) + AMP + diphosphate. The sequence is that of Leucine--tRNA ligase from Synechococcus sp. (strain CC9605).